Consider the following 117-residue polypeptide: Cliotide T9 (117 aa).

The signal sequence occupies residues 1-25; it reads MAYVRLACLAVIFFFAASVMFTVEA. The cyclopeptide (Gly-Asn) cross-link spans 26 to 55; that stretch reads GIPCGESCVFIPCLTTVVGCSCKNKVCYNN. Disulfide bonds link cysteine 29–cysteine 45, cysteine 33–cysteine 47, and cysteine 38–cysteine 52. Residues 56–117 constitute a propeptide, removed in mature form; the sequence is HVIAAEANSI…YLLKDFLKMP (62 aa).

Contains 3 disulfide bonds. In terms of processing, this is a cyclic peptide. As to expression, expressed in seed but not in root, nodule, flower, stem, shoot, leaf and pod (at protein level).

Its function is as follows. Probably participates in a plant defense mechanism. The polypeptide is Cliotide T9 (Clitoria ternatea (Butterfly pea)).